The primary structure comprises 405 residues: Imidazolonepropionase (405 aa).

Residues His-70 and His-72 each coordinate Fe(3+). 2 residues coordinate Zn(2+): His-70 and His-72. Arg-79, Tyr-142, and His-175 together coordinate 4-imidazolone-5-propanoate. Tyr-142 lines the N-formimidoyl-L-glutamate pocket. His-240 lines the Fe(3+) pocket. His-240 serves as a coordination point for Zn(2+). A 4-imidazolone-5-propanoate-binding site is contributed by Gln-243. Asp-315 provides a ligand contact to Fe(3+). Asp-315 contributes to the Zn(2+) binding site. Asn-317 and Gly-319 together coordinate N-formimidoyl-L-glutamate. A 4-imidazolone-5-propanoate-binding site is contributed by Thr-320.

It belongs to the metallo-dependent hydrolases superfamily. HutI family. It depends on Zn(2+) as a cofactor. Requires Fe(3+) as cofactor.

It is found in the cytoplasm. It catalyses the reaction 4-imidazolone-5-propanoate + H2O = N-formimidoyl-L-glutamate. Its pathway is amino-acid degradation; L-histidine degradation into L-glutamate; N-formimidoyl-L-glutamate from L-histidine: step 3/3. In terms of biological role, catalyzes the hydrolytic cleavage of the carbon-nitrogen bond in imidazolone-5-propanoate to yield N-formimidoyl-L-glutamate. It is the third step in the universal histidine degradation pathway. In Ectopseudomonas mendocina (strain ymp) (Pseudomonas mendocina), this protein is Imidazolonepropionase.